Here is a 305-residue protein sequence, read N- to C-terminus: N-acyl-aromatic-L-amino acid amidohydrolase (carboxylate-forming) (305 aa).

Residues H15 and E18 each contribute to the Zn(2+) site. Substrate is bound by residues R57 and 64–65; that span reads NR. Zn(2+) is bound at residue H108. Residues E171 and Y281 each contribute to the substrate site.

Belongs to the AspA/AstE family. Aspartoacylase subfamily. Homotetramer. It depends on Zn(2+) as a cofactor.

The protein resides in the apical cell membrane. It localises to the cytoplasm. The catalysed reaction is an N-acyl-aromatic L-alpha-amino acid + H2O = an aromatic L-alpha-amino acid + a carboxylate. The enzyme catalyses an N-acetyl-L-cysteine-S-conjugate + H2O = an S-substituted L-cysteine + acetate. In terms of biological role, plays an important role in deacetylating mercapturic acids in kidney proximal tubules. The chain is N-acyl-aromatic-L-amino acid amidohydrolase (carboxylate-forming) (acy3) from Xenopus laevis (African clawed frog).